The following is a 105-amino-acid chain: UPF0145 protein CPS_2458 (105 aa).

It belongs to the UPF0145 family.

The chain is UPF0145 protein CPS_2458 from Colwellia psychrerythraea (strain 34H / ATCC BAA-681) (Vibrio psychroerythus).